The primary structure comprises 57 residues: Large ribosomal subunit protein bL32c (57 aa).

The protein belongs to the bacterial ribosomal protein bL32 family.

It localises to the plastid. Its subcellular location is the chloroplast. The sequence is that of Large ribosomal subunit protein bL32c from Vitis vinifera (Grape).